The following is a 447-amino-acid chain: Phosphoglucosamine mutase (447 aa).

Residue Ser-103 is the Phosphoserine intermediate of the active site. Mg(2+)-binding residues include Ser-103, Asp-242, Asp-244, and Asp-246. Ser-103 bears the Phosphoserine mark.

It belongs to the phosphohexose mutase family. Mg(2+) is required as a cofactor. In terms of processing, activated by phosphorylation.

It carries out the reaction alpha-D-glucosamine 1-phosphate = D-glucosamine 6-phosphate. In terms of biological role, catalyzes the conversion of glucosamine-6-phosphate to glucosamine-1-phosphate. This chain is Phosphoglucosamine mutase, found in Dinoroseobacter shibae (strain DSM 16493 / NCIMB 14021 / DFL 12).